A 95-amino-acid polypeptide reads, in one-letter code: Small ribosomal subunit protein bS20 (95 aa).

Belongs to the bacterial ribosomal protein bS20 family.

In terms of biological role, binds directly to 16S ribosomal RNA. This Ehrlichia canis (strain Jake) protein is Small ribosomal subunit protein bS20.